The sequence spans 530 residues: Ubiquitin carboxyl-terminal hydrolase 17-like protein 5 (530 aa).

A USP domain is found at 80 to 375; it reads AGLQNMGNTC…QAYVLFYIQK (296 aa). The active-site Nucleophile is the cysteine 89. The active-site Proton acceptor is histidine 334. 2 stretches are compositionally biased toward basic and acidic residues: residues 382–392 and 398–412; these read SESVSRGREPR and DTDRRATQGELKRDH. Disordered regions lie at residues 382 to 412 and 477 to 530; these read SESVSRGREPRALGAEDTDRRATQGELKRDH and NHHP…LVCQ. Residues 493 to 505 show a composition bias toward polar residues; that stretch reads TPTHQESMNTGTL. Basic residues predominate over residues 510-524; that stretch reads GRARRSKGKNKHSKR.

This sequence belongs to the peptidase C19 family. USP17 subfamily.

It is found in the nucleus. Its subcellular location is the endoplasmic reticulum. It carries out the reaction Thiol-dependent hydrolysis of ester, thioester, amide, peptide and isopeptide bonds formed by the C-terminal Gly of ubiquitin (a 76-residue protein attached to proteins as an intracellular targeting signal).. Its function is as follows. Deubiquitinating enzyme that removes conjugated ubiquitin from specific proteins to regulate different cellular processes that may include cell proliferation, progression through the cell cycle, apoptosis, cell migration, and the cellular response to viral infection. The sequence is that of Ubiquitin carboxyl-terminal hydrolase 17-like protein 5 (USP17L5) from Homo sapiens (Human).